The following is a 430-amino-acid chain: Leucoanthocyanidin dioxygenase (430 aa).

The 100-residue stretch at 212-311 folds into the Fe2OG dioxygenase domain; that stretch reads LLLQMKINYY…RFSWAIFCEP (100 aa). H236, D238, and H292 together coordinate Fe cation. Basic and acidic residues-rich tracts occupy residues 376–407 and 415–430; these read KKDN…KEDG and KVFK…EESK. The interval 376 to 430 is disordered; it reads KKDNQDAVAENKDIKEDEQCGPAEHKDIKEDGQGAAAENKVFKENNQDVAAEESK.

The protein belongs to the iron/ascorbate-dependent oxidoreductase family. Fe cation serves as cofactor. The cofactor is L-ascorbate. Predominantly expressed in corollas and at lower levels in anthers.

The catalysed reaction is a (2R,3S,4S)-leucoanthocyanidin + 2-oxoglutarate + O2 = a 4-H-anthocyanidin with a 3-hydroxy group + succinate + CO2 + 2 H2O. Its pathway is pigment biosynthesis; anthocyanin biosynthesis. Its function is as follows. Oxidation of leucoanthocyanidins into anthocyanidins. The polypeptide is Leucoanthocyanidin dioxygenase (ANT17) (Petunia hybrida (Petunia)).